Here is a 118-residue protein sequence, read N- to C-terminus: NADH-ubiquinone oxidoreductase chain 3 (118 aa).

3 helical membrane-spanning segments follow: residues 6–26, 62–82, and 87–107; these read IFVY…VSFL, LVSI…PWAV, and IGLF…IGFV.

The protein belongs to the complex I subunit 3 family.

Its subcellular location is the mitochondrion membrane. It catalyses the reaction a ubiquinone + NADH + 5 H(+)(in) = a ubiquinol + NAD(+) + 4 H(+)(out). Core subunit of the mitochondrial membrane respiratory chain NADH dehydrogenase (Complex I) that is believed to belong to the minimal assembly required for catalysis. Complex I functions in the transfer of electrons from NADH to the respiratory chain. The immediate electron acceptor for the enzyme is believed to be ubiquinone. This Marchantia polymorpha (Common liverwort) protein is NADH-ubiquinone oxidoreductase chain 3 (ND3).